The following is a 537-amino-acid chain: CTP synthase (537 aa).

Residues 1–267 form an amidoligase domain region; the sequence is MAKFVFVTGG…ADIVLDKLGI (267 aa). Ser-13 contributes to the CTP binding site. Ser-13 serves as a coordination point for UTP. Residue 14–19 participates in ATP binding; sequence SLGKGI. L-glutamine is bound at residue Tyr-54. An ATP-binding site is contributed by Asp-71. 2 residues coordinate Mg(2+): Asp-71 and Glu-141. Residues 148–150, 188–193, and Lys-224 contribute to the CTP site; these read DIE and KTKPTQ. UTP is bound by residues 188–193 and Lys-224; that span reads KTKPTQ. In terms of domain architecture, Glutamine amidotransferase type-1 spans 292 to 534; the sequence is TIALVGKYVS…IGAARKYKES (243 aa). Gly-354 contacts L-glutamine. Cys-381 (nucleophile; for glutamine hydrolysis) is an active-site residue. Residues 382–385, Glu-405, and Arg-462 contribute to the L-glutamine site; that span reads LGMQ. Catalysis depends on residues His-507 and Glu-509.

The protein belongs to the CTP synthase family. Homotetramer.

It catalyses the reaction UTP + L-glutamine + ATP + H2O = CTP + L-glutamate + ADP + phosphate + 2 H(+). The enzyme catalyses L-glutamine + H2O = L-glutamate + NH4(+). The catalysed reaction is UTP + NH4(+) + ATP = CTP + ADP + phosphate + 2 H(+). The protein operates within pyrimidine metabolism; CTP biosynthesis via de novo pathway; CTP from UDP: step 2/2. With respect to regulation, allosterically activated by GTP, when glutamine is the substrate; GTP has no effect on the reaction when ammonia is the substrate. The allosteric effector GTP functions by stabilizing the protein conformation that binds the tetrahedral intermediate(s) formed during glutamine hydrolysis. Inhibited by the product CTP, via allosteric rather than competitive inhibition. In terms of biological role, catalyzes the ATP-dependent amination of UTP to CTP with either L-glutamine or ammonia as the source of nitrogen. Regulates intracellular CTP levels through interactions with the four ribonucleotide triphosphates. The sequence is that of CTP synthase from Pelotomaculum thermopropionicum (strain DSM 13744 / JCM 10971 / SI).